The sequence spans 329 residues: DNA-directed RNA polymerase subunit alpha (329 aa).

The tract at residues 1–234 (MQGSVTEFLK…EQLDAFVELR (234 aa)) is alpha N-terminal domain (alpha-NTD). Positions 248-329 (FDPILLRPVD…WPPASLADDL (82 aa)) are alpha C-terminal domain (alpha-CTD).

Belongs to the RNA polymerase alpha chain family. In terms of assembly, homodimer. The RNAP catalytic core consists of 2 alpha, 1 beta, 1 beta' and 1 omega subunit. When a sigma factor is associated with the core the holoenzyme is formed, which can initiate transcription.

It carries out the reaction RNA(n) + a ribonucleoside 5'-triphosphate = RNA(n+1) + diphosphate. Its function is as follows. DNA-dependent RNA polymerase catalyzes the transcription of DNA into RNA using the four ribonucleoside triphosphates as substrates. This Shewanella baltica (strain OS155 / ATCC BAA-1091) protein is DNA-directed RNA polymerase subunit alpha.